The chain runs to 1164 residues: DNA-directed RNA polymerase 133 kDa polypeptide (1164 aa).

This sequence belongs to the RNA polymerase beta chain family. In terms of assembly, the DNA-dependent RNA polymerase used for intermediate and late genes expression consists of eight subunits 147 kDa, 133 kDa, 35 kDa, 30 kDa, 22 kDa, 19 kDa, 18 kDa and 7 kDa totalling more than 500 kDa in mass. The same holoenzyme, with the addition of the transcription-specificity factor RAP94, is used for early gene expression.

It localises to the virion. It catalyses the reaction RNA(n) + a ribonucleoside 5'-triphosphate = RNA(n+1) + diphosphate. Its function is as follows. Part of the DNA-dependent RNA polymerase which catalyzes the transcription of viral DNA into RNA using the four ribonucleoside triphosphates as substrates. Responsible for the transcription of early, intermediate and late genes. DNA-dependent RNA polymerase associates with the early transcription factor (ETF), itself composed of OPG118 and OPG133, thereby allowing the early genes transcription. Late transcription, and probably also intermediate transcription, require newly synthesized RNA polymerase. The protein is DNA-directed RNA polymerase 133 kDa polypeptide (OPG151) of Homo sapiens (Human).